A 744-amino-acid polypeptide reads, in one-letter code: Adenosylcobalamin-dependent ribonucleoside-triphosphate reductase (744 aa).

Cysteines 120 and 424 form a disulfide. Residues 148–159 (SMPFSFLFDQLM) form an effector region-1 region. Residues 169–318 (VNSNIKQIPK…ICNLIGKTVV (150 aa)) form an effector region-2 region. Residues cysteine 413 and glutamate 415 contribute to the active site. The tract at residues 570-631 (FHYAGYLIQR…SKNFASAGTV (62 aa)) is adenosylcobalamin-binding-1. Positions 690-729 (LKQAPKEPINKKTYEERAALITDDVEEVFTKQNDDQKGLE) are adenosylcobalamin-binding-2.

This sequence belongs to the class II ribonucleoside-triphosphate reductase family. Monomer. Adenosylcob(III)alamin is required as a cofactor.

The enzyme catalyses a 2'-deoxyribonucleoside 5'-triphosphate + [thioredoxin]-disulfide + H2O = a ribonucleoside 5'-triphosphate + [thioredoxin]-dithiol. Allosterically regulated by ATP and dNTP. The chain is Adenosylcobalamin-dependent ribonucleoside-triphosphate reductase (rtpR) from Lactobacillus acidophilus (strain ATCC 700396 / NCK56 / N2 / NCFM).